The sequence spans 390 residues: MSVTIDPRRHDAVLFDTALNSTQALVRQLQQARVGTATFASGGGGHDAAIQALTESADRVGARPGRCVVITADAASVAAARDSGFALVIGVDQAGHRDALPDHGADTVLADLDEVRVRAGDRHMSELPDALQALGRPDGLTVPRPAVFFDFDGTLSEIVDDPDAATPTAGAVAALQQLAAQCPVAILSGRDLADVSQRVGLPGIWYAGSHGFELTAPDGTHHQNEAAAAAIPVLEQAAAQLRDRLGSIPGVMVEHKRFGVATHYRNAARDRVGEIAAVVRAAGQRDGLRVTTGREVIELRPDIDWDKGKTLRWVIDHLPDQRAAPLVPIYLGDDITDEDAFDAVGPNGVAIMVRHNEDGDRATAALFALESPARVAEFTGRLASQLSTLG.

Asp150 serves as the catalytic Nucleophile. Mg(2+) contacts are provided by Asp150, Asp152, and Asp333. 150–152 serves as a coordination point for substrate; that stretch reads DFD.

The protein belongs to the trehalose phosphatase family. Mg(2+) is required as a cofactor.

The enzyme catalyses alpha,alpha-trehalose 6-phosphate + H2O = alpha,alpha-trehalose + phosphate. It participates in glycan biosynthesis; trehalose biosynthesis. Functionally, removes the phosphate from trehalose 6-phosphate to produce free trehalose. This chain is Trehalose-phosphate phosphatase (otsB), found in Mycobacterium marinum (strain ATCC BAA-535 / M).